Consider the following 310-residue polypeptide: L-lactate dehydrogenase (310 aa).

NAD(+) contacts are provided by residues Val11, Asp32, Tyr62, and 76 to 77 (GV). Residues Gln79, Arg85, and 117 to 120 (NPVD) contribute to the substrate site. Residues 115 to 117 (ASN) and Ser140 each bind NAD(+). A substrate-binding site is contributed by 145-148 (DTAR). Beta-D-fructose 1,6-bisphosphate-binding residues include Arg150 and His165. The active-site Proton acceptor is the His172. Substrate is bound at residue Thr227.

Belongs to the LDH/MDH superfamily. LDH family. As to quaternary structure, homotetramer.

It is found in the cytoplasm. It carries out the reaction (S)-lactate + NAD(+) = pyruvate + NADH + H(+). It participates in fermentation; pyruvate fermentation to lactate; (S)-lactate from pyruvate: step 1/1. With respect to regulation, allosterically activated by fructose 1,6-bisphosphate (FBP). Its function is as follows. Catalyzes the conversion of lactate to pyruvate. The chain is L-lactate dehydrogenase from Allorhizobium ampelinum (strain ATCC BAA-846 / DSM 112012 / S4) (Agrobacterium vitis (strain S4)).